Reading from the N-terminus, the 404-residue chain is Sulfate adenylyltransferase (404 aa).

It belongs to the sulfate adenylyltransferase family.

It carries out the reaction sulfate + ATP + H(+) = adenosine 5'-phosphosulfate + diphosphate. It functions in the pathway sulfur metabolism; hydrogen sulfide biosynthesis; sulfite from sulfate: step 1/3. The sequence is that of Sulfate adenylyltransferase from Chlorobium chlorochromatii (strain CaD3).